Reading from the N-terminus, the 79-residue chain is Sec-independent protein translocase protein TatA (79 aa).

The helical transmembrane segment at 1–21 (MGSLSIWHWLIVLLIVALVFG) threads the bilayer. A disordered region spans residues 46-79 (ADAPAAEAQQRELPRNGAVDVEAKEKTPRSGDYR). Positions 66–79 (VEAKEKTPRSGDYR) are enriched in basic and acidic residues.

It belongs to the TatA/E family. As to quaternary structure, the Tat system comprises two distinct complexes: a TatABC complex, containing multiple copies of TatA, TatB and TatC subunits, and a separate TatA complex, containing only TatA subunits. Substrates initially bind to the TatABC complex, which probably triggers association of the separate TatA complex to form the active translocon.

It is found in the cell inner membrane. Part of the twin-arginine translocation (Tat) system that transports large folded proteins containing a characteristic twin-arginine motif in their signal peptide across membranes. TatA could form the protein-conducting channel of the Tat system. In Paraburkholderia phytofirmans (strain DSM 17436 / LMG 22146 / PsJN) (Burkholderia phytofirmans), this protein is Sec-independent protein translocase protein TatA.